A 351-amino-acid chain; its full sequence is Ribonucleoside-diphosphate reductase subunit M2 B (351 aa).

Positions 1–31 (MGDPERPEAAGLDQDERSSSDTNENEIKSNE) are disordered. 3 residues coordinate Fe cation: Asp-100, Glu-131, and His-134. Tyr-138 is an active-site residue. Fe cation is bound by residues Glu-194, Glu-228, and His-231.

Belongs to the ribonucleoside diphosphate reductase small chain family. In terms of assembly, heterotetramer with large (RRM1) subunit. Interacts with p53/TP53. Interacts with RRM1 in response to DNA damage. The cofactor is Fe cation.

It is found in the cytoplasm. The protein resides in the nucleus. It catalyses the reaction a 2'-deoxyribonucleoside 5'-diphosphate + [thioredoxin]-disulfide + H2O = a ribonucleoside 5'-diphosphate + [thioredoxin]-dithiol. Functionally, plays a pivotal role in cell survival by repairing damaged DNA in a p53/TP53-dependent manner. Supplies deoxyribonucleotides for DNA repair in cells arrested at G1 or G2. Contains an iron-tyrosyl free radical center required for catalysis. Forms an active ribonucleotide reductase (RNR) complex with RRM1 which is expressed both in resting and proliferating cells in response to DNA damage. In Pongo abelii (Sumatran orangutan), this protein is Ribonucleoside-diphosphate reductase subunit M2 B (RRM2B).